Reading from the N-terminus, the 227-residue chain is Small heat shock protein hspG3 (227 aa).

The 197-residue stretch at 31-227 folds into the sHSP domain; sequence NKRVDIIPSM…SSNTIKININ (197 aa). Residues 119–164 are disordered; it reads QQQQLENSNKENDEPSIEEFEEDVKSKSELNKTTLNTTENKDEDKT.

The protein belongs to the small heat shock protein (HSP20) family.

This chain is Small heat shock protein hspG3 (hspG3), found in Dictyostelium discoideum (Social amoeba).